We begin with the raw amino-acid sequence, 334 residues long: GTP 3',8-cyclase (334 aa).

The Radical SAM core domain maps to 13–239; that stretch reads RFHRKFYYLR…KVKAVNDGPA (227 aa). Residue R22 coordinates GTP. 2 residues coordinate [4Fe-4S] cluster: C29 and C33. Position 35 (Y35) interacts with S-adenosyl-L-methionine. C36 contributes to the [4Fe-4S] cluster binding site. R73 provides a ligand contact to GTP. G77 lines the S-adenosyl-L-methionine pocket. GTP is bound at residue T104. An S-adenosyl-L-methionine-binding site is contributed by S128. A GTP-binding site is contributed by K165. M199 serves as a coordination point for S-adenosyl-L-methionine. [4Fe-4S] cluster contacts are provided by C262 and C265. 267–269 serves as a coordination point for GTP; that stretch reads RLR. Residue C279 coordinates [4Fe-4S] cluster.

This sequence belongs to the radical SAM superfamily. MoaA family. In terms of assembly, monomer and homodimer. The cofactor is [4Fe-4S] cluster.

It carries out the reaction GTP + AH2 + S-adenosyl-L-methionine = (8S)-3',8-cyclo-7,8-dihydroguanosine 5'-triphosphate + 5'-deoxyadenosine + L-methionine + A + H(+). It functions in the pathway cofactor biosynthesis; molybdopterin biosynthesis. In terms of biological role, catalyzes the cyclization of GTP to (8S)-3',8-cyclo-7,8-dihydroguanosine 5'-triphosphate. This chain is GTP 3',8-cyclase, found in Vibrio atlanticus (strain LGP32) (Vibrio splendidus (strain Mel32)).